A 465-amino-acid chain; its full sequence is Cysteine--tRNA ligase (465 aa).

Residue Cys30 participates in Zn(2+) binding. A 'HIGH' region motif is present at residues 32-42 (ITVYDYCHVGH). Residues Cys214, His239, and Glu243 each contribute to the Zn(2+) site. The 'KMSKS' region motif lies at 271 to 275 (KMSKS). Residue Lys274 coordinates ATP.

Belongs to the class-I aminoacyl-tRNA synthetase family. Monomer. Requires Zn(2+) as cofactor.

The protein resides in the cytoplasm. It carries out the reaction tRNA(Cys) + L-cysteine + ATP = L-cysteinyl-tRNA(Cys) + AMP + diphosphate. The chain is Cysteine--tRNA ligase from Burkholderia vietnamiensis (strain G4 / LMG 22486) (Burkholderia cepacia (strain R1808)).